The following is a 497-amino-acid chain: Pentatricopeptide repeat-containing protein At2g36240 (497 aa).

PPR repeat units follow at residues 156–186, 192–226, 227–261, 262–296, 297–331, 332–366, 367–401, 402–436, and 437–471; these read LEPIFRSAIDAYCRARKMDYALLAFDTMKRL, NVGVYNTVVNGYVKSGDMDKALRFYQRMGKERAKP, DVCTFNILINGYCRSSKFDLALDLFREMKEKGCEP, NVVSFNTLIRGFLSSGKIEEGVKMAYEMIELGCRF, SEATCEILVDGLCREGRVDDACGLVLDLLNKRVLP, SEFDYGSLVEKLCGENKAVRAMEMMEELWKKGQTP, CFIACTTLVEGLRKSGRTEKASGFMEKMMNAGILP, DSVTFNLLLRDLCSSDHSTDANRLRLLASSKGYEP, and DETTYHVLVSGFTKEGRRKEGEVLVNEMLDKDMLP.

The protein belongs to the PPR family. P subfamily.

In Arabidopsis thaliana (Mouse-ear cress), this protein is Pentatricopeptide repeat-containing protein At2g36240.